The primary structure comprises 417 residues: NADH-quinone oxidoreductase subunit D (417 aa).

It belongs to the complex I 49 kDa subunit family. NDH-1 is composed of 14 different subunits. Subunits NuoB, C, D, E, F, and G constitute the peripheral sector of the complex.

The protein localises to the cell inner membrane. It catalyses the reaction a quinone + NADH + 5 H(+)(in) = a quinol + NAD(+) + 4 H(+)(out). Its function is as follows. NDH-1 shuttles electrons from NADH, via FMN and iron-sulfur (Fe-S) centers, to quinones in the respiratory chain. The immediate electron acceptor for the enzyme in this species is believed to be ubiquinone. Couples the redox reaction to proton translocation (for every two electrons transferred, four hydrogen ions are translocated across the cytoplasmic membrane), and thus conserves the redox energy in a proton gradient. This Coxiella burnetii (strain CbuG_Q212) (Coxiella burnetii (strain Q212)) protein is NADH-quinone oxidoreductase subunit D.